The chain runs to 200 residues: GTP cyclohydrolase-2 (200 aa).

50-54 (RVHSE) contributes to the GTP binding site. Zn(2+) contacts are provided by cysteine 55, cysteine 66, and cysteine 68. GTP-binding positions include glutamine 71, 93-95 (EGR), and threonine 115. The active-site Proton acceptor is the aspartate 127. The active-site Nucleophile is arginine 129. Positions 150 and 155 each coordinate GTP.

Belongs to the GTP cyclohydrolase II family. Zn(2+) serves as cofactor.

The catalysed reaction is GTP + 4 H2O = 2,5-diamino-6-hydroxy-4-(5-phosphoribosylamino)-pyrimidine + formate + 2 phosphate + 3 H(+). It participates in cofactor biosynthesis; riboflavin biosynthesis; 5-amino-6-(D-ribitylamino)uracil from GTP: step 1/4. In terms of biological role, catalyzes the conversion of GTP to 2,5-diamino-6-ribosylamino-4(3H)-pyrimidinone 5'-phosphate (DARP), formate and pyrophosphate. The protein is GTP cyclohydrolase-2 of Acinetobacter baumannii (strain AB307-0294).